A 173-amino-acid chain; its full sequence is Crossover junction endodeoxyribonuclease RuvC (173 aa).

Residues Asp-8, Glu-67, and Asp-139 contribute to the active site. Residues Asp-8, Glu-67, and Asp-139 each coordinate Mg(2+).

This sequence belongs to the RuvC family. As to quaternary structure, homodimer which binds Holliday junction (HJ) DNA. The HJ becomes 2-fold symmetrical on binding to RuvC with unstacked arms; it has a different conformation from HJ DNA in complex with RuvA. In the full resolvosome a probable DNA-RuvA(4)-RuvB(12)-RuvC(2) complex forms which resolves the HJ. Requires Mg(2+) as cofactor.

The protein localises to the cytoplasm. The enzyme catalyses Endonucleolytic cleavage at a junction such as a reciprocal single-stranded crossover between two homologous DNA duplexes (Holliday junction).. Functionally, the RuvA-RuvB-RuvC complex processes Holliday junction (HJ) DNA during genetic recombination and DNA repair. Endonuclease that resolves HJ intermediates. Cleaves cruciform DNA by making single-stranded nicks across the HJ at symmetrical positions within the homologous arms, yielding a 5'-phosphate and a 3'-hydroxyl group; requires a central core of homology in the junction. The consensus cleavage sequence is 5'-(A/T)TT(C/G)-3'. Cleavage occurs on the 3'-side of the TT dinucleotide at the point of strand exchange. HJ branch migration catalyzed by RuvA-RuvB allows RuvC to scan DNA until it finds its consensus sequence, where it cleaves and resolves the cruciform DNA. This Shewanella sp. (strain ANA-3) protein is Crossover junction endodeoxyribonuclease RuvC.